The following is a 490-amino-acid chain: tRNA-guanine(15) transglycosylase (490 aa).

The Nucleophile role is filled by Asp90. Substrate contacts are provided by Asp125 and Ala193. Zn(2+) contacts are provided by Cys276, Cys278, and Cys281.

This sequence belongs to the archaeosine tRNA-ribosyltransferase family. Zn(2+) is required as a cofactor.

The catalysed reaction is guanosine(15) in tRNA + 7-cyano-7-deazaguanine = 7-cyano-7-carbaguanosine(15) in tRNA + guanine. It participates in tRNA modification; archaeosine-tRNA biosynthesis. In terms of biological role, exchanges the guanine residue with 7-cyano-7-deazaguanine (preQ0) at position 15 in the dihydrouridine loop (D-loop) of archaeal tRNAs. In Methanosarcina mazei (strain ATCC BAA-159 / DSM 3647 / Goe1 / Go1 / JCM 11833 / OCM 88) (Methanosarcina frisia), this protein is tRNA-guanine(15) transglycosylase.